The primary structure comprises 547 residues: NXPE family member 1 (547 aa).

The first 21 residues, 1–21 (MSSNTMLQKTLLILISFSVVT), serve as a signal peptide directing secretion. Residues Asn39 and Asn211 are each glycosylated (N-linked (GlcNAc...) asparagine).

The protein belongs to the NXPE family.

The protein resides in the secreted. This Homo sapiens (Human) protein is NXPE family member 1 (NXPE1).